We begin with the raw amino-acid sequence, 187 residues long: MADTSDFKNGLVLKIDGQLQQIVEFQHVKPGKGPAFVRTKLKNVVSGKIVDKTFNAGVKVETATVDRRDMTYLYHDGSDYVFMDGETFDQISISEATIGSSARFLLENMAVQVAMHEGAPLYVELPVSVELEVTHTDIGLQGDRSTGGTKPATLETGAEVQVPLFINTGDKLRIDSRDGSYLGRVNA.

The protein belongs to the elongation factor P family.

It is found in the cytoplasm. It functions in the pathway protein biosynthesis; polypeptide chain elongation. Functionally, involved in peptide bond synthesis. Stimulates efficient translation and peptide-bond synthesis on native or reconstituted 70S ribosomes in vitro. Probably functions indirectly by altering the affinity of the ribosome for aminoacyl-tRNA, thus increasing their reactivity as acceptors for peptidyl transferase. The chain is Elongation factor P from Nocardia farcinica (strain IFM 10152).